A 207-amino-acid polypeptide reads, in one-letter code: High frequency lysogenization protein HflD homolog (207 aa).

Belongs to the HflD family.

The protein localises to the cytoplasm. It localises to the cell inner membrane. This is High frequency lysogenization protein HflD homolog from Methylococcus capsulatus (strain ATCC 33009 / NCIMB 11132 / Bath).